We begin with the raw amino-acid sequence, 133 residues long: Ribonuclease P protein component (133 aa).

It belongs to the RnpA family. As to quaternary structure, consists of a catalytic RNA component (M1 or rnpB) and a protein subunit.

The enzyme catalyses Endonucleolytic cleavage of RNA, removing 5'-extranucleotides from tRNA precursor.. In terms of biological role, RNaseP catalyzes the removal of the 5'-leader sequence from pre-tRNA to produce the mature 5'-terminus. It can also cleave other RNA substrates such as 4.5S RNA. The protein component plays an auxiliary but essential role in vivo by binding to the 5'-leader sequence and broadening the substrate specificity of the ribozyme. The chain is Ribonuclease P protein component from Pseudomonas putida (strain ATCC 47054 / DSM 6125 / CFBP 8728 / NCIMB 11950 / KT2440).